The following is a 314-amino-acid chain: 1D-myo-inositol 2-acetamido-2-deoxy-alpha-D-glucopyranoside deacetylase 2 (314 aa).

Zn(2+)-binding residues include H25, D28, and H161.

This sequence belongs to the MshB deacetylase family. The cofactor is Zn(2+).

The catalysed reaction is 1D-myo-inositol 2-acetamido-2-deoxy-alpha-D-glucopyranoside + H2O = 1D-myo-inositol 2-amino-2-deoxy-alpha-D-glucopyranoside + acetate. Catalyzes the deacetylation of 1D-myo-inositol 2-acetamido-2-deoxy-alpha-D-glucopyranoside (GlcNAc-Ins) in the mycothiol biosynthesis pathway. The protein is 1D-myo-inositol 2-acetamido-2-deoxy-alpha-D-glucopyranoside deacetylase 2 of Frankia casuarinae (strain DSM 45818 / CECT 9043 / HFP020203 / CcI3).